The primary structure comprises 975 residues: 5'-3' exoribonuclease 2 homolog (975 aa).

The CCHC-type zinc finger occupies Arg-262 to Gly-279. Disordered stretches follow at residues Met-424 to Gln-443 and Ser-505 to Lys-532. Residues Asp-534 to Glu-787 form an interaction with paxt-1 region. Over residues Glu-804–Arg-821 the composition is skewed to basic and acidic residues. A disordered region spans residues Glu-804–Arg-975. Composition is skewed to gly residues over residues Arg-850–Arg-860, Asn-886–Pro-895, and Gly-908–Ser-932.

This sequence belongs to the 5'-3' exonuclease family. XRN2/RAT1 subfamily. Interacts with paxt-1 (via N-terminus); the interaction is direct and results in stabilization of xrn-2 in the complex. As to expression, expressed in the pharyngeal myoepithelium and intestine. Also expressed in several anterior neurons including the sensory neurons, as well as the interneuron PVT and the pharyngeal motorneuron M5.

It is found in the nucleus. Its function is as follows. Possesses 5'-&gt;3' exoribonuclease activity. Plays a role in maintenance of steady-state concentration and turnover of microRNAs (miRNA) by degradation of mature miRNA. Degradation role is enhanced when in complex with paxt-1. Partially redundant to xrn-1 in miRNA guide strand degradation. Implicated in differential regulation of mRNAs such as let-7 by controlling the accumulation of mature miRNA. Positively regulates molting of the pharyngeal cuticle. The chain is 5'-3' exoribonuclease 2 homolog from Caenorhabditis elegans.